The primary structure comprises 581 residues: Arginine--tRNA ligase (581 aa).

Positions 126-136 (PNLAKEMHVGH) match the 'HIGH' region motif.

This sequence belongs to the class-I aminoacyl-tRNA synthetase family. Monomer.

It localises to the cytoplasm. The enzyme catalyses tRNA(Arg) + L-arginine + ATP = L-arginyl-tRNA(Arg) + AMP + diphosphate. This chain is Arginine--tRNA ligase, found in Shewanella frigidimarina (strain NCIMB 400).